We begin with the raw amino-acid sequence, 505 residues long: Flagellin (505 aa).

Belongs to the bacterial flagellin family.

It localises to the secreted. The protein localises to the bacterial flagellum. Flagellin is the subunit protein which polymerizes to form the filaments of bacterial flagella. The protein is Flagellin (fliC) of Salmonella enteritidis.